A 251-amino-acid polypeptide reads, in one-letter code: uncharacterized protein (251 aa).

A signal peptide spans 1 to 18 (MRILIILSIILCSFFARA).

Belongs to the MlaA family.

This is an uncharacterized protein from Rickettsia typhi (strain ATCC VR-144 / Wilmington).